The sequence spans 260 residues: Hydroxyethylthiazole kinase (260 aa).

Met-38 is a substrate binding site. Residues Arg-114 and Thr-159 each contribute to the ATP site. Gly-186 lines the substrate pocket.

It belongs to the Thz kinase family. It depends on Mg(2+) as a cofactor.

The catalysed reaction is 5-(2-hydroxyethyl)-4-methylthiazole + ATP = 4-methyl-5-(2-phosphooxyethyl)-thiazole + ADP + H(+). Its pathway is cofactor biosynthesis; thiamine diphosphate biosynthesis; 4-methyl-5-(2-phosphoethyl)-thiazole from 5-(2-hydroxyethyl)-4-methylthiazole: step 1/1. Functionally, catalyzes the phosphorylation of the hydroxyl group of 4-methyl-5-beta-hydroxyethylthiazole (THZ). In Helicobacter pylori (strain HPAG1), this protein is Hydroxyethylthiazole kinase.